Consider the following 95-residue polypeptide: Small ribosomal subunit protein bS6 (95 aa).

The protein belongs to the bacterial ribosomal protein bS6 family.

Its function is as follows. Binds together with bS18 to 16S ribosomal RNA. This Streptococcus agalactiae serotype Ia (strain ATCC 27591 / A909 / CDC SS700) protein is Small ribosomal subunit protein bS6.